The chain runs to 89 residues: Large ribosomal subunit protein eL34 (89 aa).

The disordered stretch occupies residues 1 to 22 (MPAPRYKSGSSKKVYRKAPGNS).

It belongs to the eukaryotic ribosomal protein eL34 family.

This Methanococcus maripaludis (strain DSM 14266 / JCM 13030 / NBRC 101832 / S2 / LL) protein is Large ribosomal subunit protein eL34.